Consider the following 341-residue polypeptide: Diguanylate cyclase DgcP (341 aa).

In terms of domain architecture, GAF spans 18 to 154 (SLESLVRQLL…LFAGLIAQYI (137 aa)). Positions 204-337 (HKIMIAFIDL…KQKTPFVAHP (134 aa)) constitute a GGDEF domain. A Mg(2+)-binding site is contributed by D212. N220, H225, and D229 together coordinate substrate. Residue D255 coordinates Mg(2+). The active-site Proton acceptor is the D255.

As to quaternary structure, homodimer. Mg(2+) is required as a cofactor.

It carries out the reaction 2 GTP = 3',3'-c-di-GMP + 2 diphosphate. Its pathway is purine metabolism; 3',5'-cyclic di-GMP biosynthesis. Catalyzes the synthesis of cyclic-di-GMP (c-di-GMP) via the condensation of 2 GTP molecules. Cyclic-di-GMP is a second messenger which controls cell surface-associated traits in bacteria. The chain is Diguanylate cyclase DgcP from Escherichia coli (strain K12).